The chain runs to 163 residues: Nucleotide-binding protein APJL_1242 (163 aa).

This sequence belongs to the YajQ family.

Nucleotide-binding protein. This is Nucleotide-binding protein APJL_1242 from Actinobacillus pleuropneumoniae serotype 3 (strain JL03).